Reading from the N-terminus, the 64-residue chain is Large ribosomal subunit protein uL30 (64 aa).

It belongs to the universal ribosomal protein uL30 family. In terms of assembly, part of the 50S ribosomal subunit.

The polypeptide is Large ribosomal subunit protein uL30 (Rhodopseudomonas palustris (strain HaA2)).